A 231-amino-acid chain; its full sequence is 5'-methylthioadenosine/S-adenosylhomocysteine nucleosidase (231 aa).

E12 functions as the Proton acceptor in the catalytic mechanism. Substrate contacts are provided by residues G78, V153, and 174–175; that span reads ME. The active-site Proton donor is D198.

It belongs to the PNP/UDP phosphorylase family. MtnN subfamily.

It catalyses the reaction S-adenosyl-L-homocysteine + H2O = S-(5-deoxy-D-ribos-5-yl)-L-homocysteine + adenine. It carries out the reaction S-methyl-5'-thioadenosine + H2O = 5-(methylsulfanyl)-D-ribose + adenine. The catalysed reaction is 5'-deoxyadenosine + H2O = 5-deoxy-D-ribose + adenine. It functions in the pathway amino-acid biosynthesis; L-methionine biosynthesis via salvage pathway; S-methyl-5-thio-alpha-D-ribose 1-phosphate from S-methyl-5'-thioadenosine (hydrolase route): step 1/2. Functionally, catalyzes the irreversible cleavage of the glycosidic bond in both 5'-methylthioadenosine (MTA) and S-adenosylhomocysteine (SAH/AdoHcy) to adenine and the corresponding thioribose, 5'-methylthioribose and S-ribosylhomocysteine, respectively. Also cleaves 5'-deoxyadenosine, a toxic by-product of radical S-adenosylmethionine (SAM) enzymes, into 5-deoxyribose and adenine. The sequence is that of 5'-methylthioadenosine/S-adenosylhomocysteine nucleosidase from Vibrio parahaemolyticus serotype O3:K6 (strain RIMD 2210633).